A 304-amino-acid chain; its full sequence is Glutaminase (304 aa).

7 residues coordinate substrate: serine 63, asparagine 114, glutamate 158, asparagine 165, tyrosine 189, tyrosine 240, and valine 258.

This sequence belongs to the glutaminase family. In terms of assembly, homotetramer.

The enzyme catalyses L-glutamine + H2O = L-glutamate + NH4(+). The polypeptide is Glutaminase (Shewanella sp. (strain ANA-3)).